A 332-amino-acid polypeptide reads, in one-letter code: Glyoxylate reductase (332 aa).

Residues 155-158 (MGRI) and 236-238 (TSR) each bind NADP(+). Catalysis depends on residues Arg-238 and Glu-267. His-286 functions as the Proton donor in the catalytic mechanism. An NADP(+)-binding site is contributed by 286–288 (HAA).

Belongs to the D-isomer specific 2-hydroxyacid dehydrogenase family. GyaR subfamily. As to quaternary structure, homodimer.

The protein localises to the cytoplasm. It carries out the reaction glycolate + NAD(+) = glyoxylate + NADH + H(+). This Korarchaeum cryptofilum (strain OPF8) protein is Glyoxylate reductase.